Here is a 591-residue protein sequence, read N- to C-terminus: Negative elongation factor D (591 aa).

The disordered stretch occupies residues 1–44; sequence MAGPAPGTIMGEDYFGNASEWGEEADGGQHQEDDSGEGEDDAEV. The span at 34–44 shows a compositional bias: acidic residues; that stretch reads DSGEGEDDAEV.

It belongs to the NELF-D family. The NELF complex is composed of NELFA, NELFB, NELFCD and NELFE; NELFA and NELFCD form a stable subcomplex that binds primarily through NELFCD to the N-terminus of NELFB. Binds RNA which may help to stabilize the NELF complex on nucleic acid. In vitro, the NELFA:NELFCD subcomplex binds to ssDNA and ssRNA in a sequence- and structure-dependent manner. Interacts with ARAF1. Interacts with PCF11. Interacts with NELFB. Interacts with KAT8.

The protein localises to the nucleus. Its function is as follows. Essential component of the NELF complex, a complex that negatively regulates the elongation of transcription by RNA polymerase II. The NELF complex, which acts via an association with the DSIF complex and causes transcriptional pausing, is counteracted by the P-TEFb kinase complex. This is Negative elongation factor D (Nelfcd) from Mus musculus (Mouse).